The following is a 696-amino-acid chain: MAKTNQAITICSLLLLLLLSETTSHLLCSDSKTPVNNNETLQFCDSYKERSCCNSKDDLQLQNRFNSMNISDSNCSSLLKSILCSKCDEFSGQLFGDDDSSLVPILCNSTSQDLCSKLWDSCQNISIVSSPFSPTLLGGATSPSTSSNSSTLTDLWKSQTEFCTAFGGPSQTNNNKTKCFNGEPVNRDTSDDDEDDVKTPKGICLEKIGTGSYLNMVAHPDGSNRAFFSNQPGKIWLGTIPDQDSGKPMEIDESTPFVDITDQVSFDTQFGMMGMAFHPKFAENGRFFASFNCDKVKSPGCSGRCACNSDVNCDPSKLPKDDGTTPCRYQTVVSEYTANGTSSSPSTAKIGKASEVRRIFTMGLPYSSSHGGQILFGPDGYLYLMTGDGGGVSDTHNFAQNKKSLLGKILRLDVDVMPSVSEISKLGLWGNYSIPKNNPFQGNENEQPEIWALGLRNPWRCSFDSERPDYFLCADVGKDTYEEVDIITMGGNYGWRTYEGPYVFSPLSPFGENVSSDSNLTFPILGYNHSEVNKHEGSASIIGGYFYRSNTDPCSYGTYLYADLYANAMWAAIESPEDSGNFTDSLIPFSCSKDSPMKCTAAPGGASSGPALGYIYSFGQDNNKDIHLLTSSGVYRIVRPSRCNLACSKENTTASAGKQNPAGSAPPQPLPSSARKLCFSVFLLLSLLMMFLTLLD.

The first 24 residues, 1 to 24 (MAKTNQAITICSLLLLLLLSETTS), serve as a signal peptide directing secretion. N-linked (GlcNAc...) asparagine glycans are attached at residues Asn38, Asn69, Asn74, Asn108, Asn124, Asn148, Asn175, Asn339, Asn431, Asn513, Asn519, Asn528, Asn581, and Asn651. Ser672 is lipidated: GPI-anchor amidated serine. Positions 673–696 (SARKLCFSVFLLLSLLMMFLTLLD) are cleaved as a propeptide — removed in mature form.

Belongs to the PQQ oxidoreductase GdhB family. It depends on pyrroloquinoline quinone as a cofactor.

It is found in the cell membrane. This Arabidopsis thaliana (Mouse-ear cress) protein is HIPL2 protein (HIPL2).